The following is a 93-amino-acid chain: UPF0298 protein LMHCC_0506 (93 aa).

This sequence belongs to the UPF0298 family.

Its subcellular location is the cytoplasm. This Listeria monocytogenes serotype 4a (strain HCC23) protein is UPF0298 protein LMHCC_0506.